The primary structure comprises 79 residues: Large ribosomal subunit protein bL28 (79 aa).

Belongs to the bacterial ribosomal protein bL28 family.

This Christiangramia forsetii (strain DSM 17595 / CGMCC 1.15422 / KT0803) (Gramella forsetii) protein is Large ribosomal subunit protein bL28.